The primary structure comprises 630 residues: 1-deoxy-D-xylulose-5-phosphate synthase (630 aa).

Thiamine diphosphate contacts are provided by residues histidine 80 and 121 to 123 (GHS). Position 152 (aspartate 152) interacts with Mg(2+). Thiamine diphosphate contacts are provided by residues 153–154 (GA), asparagine 181, tyrosine 288, and glutamate 370. Residue asparagine 181 coordinates Mg(2+).

It belongs to the transketolase family. DXPS subfamily. Homodimer. The cofactor is Mg(2+). Thiamine diphosphate serves as cofactor.

It catalyses the reaction D-glyceraldehyde 3-phosphate + pyruvate + H(+) = 1-deoxy-D-xylulose 5-phosphate + CO2. Its pathway is metabolic intermediate biosynthesis; 1-deoxy-D-xylulose 5-phosphate biosynthesis; 1-deoxy-D-xylulose 5-phosphate from D-glyceraldehyde 3-phosphate and pyruvate: step 1/1. In terms of biological role, catalyzes the acyloin condensation reaction between C atoms 2 and 3 of pyruvate and glyceraldehyde 3-phosphate to yield 1-deoxy-D-xylulose-5-phosphate (DXP). This chain is 1-deoxy-D-xylulose-5-phosphate synthase, found in Colwellia psychrerythraea (strain 34H / ATCC BAA-681) (Vibrio psychroerythus).